We begin with the raw amino-acid sequence, 100 residues long: Enhancer of yellow 2 transcription factor (100 aa).

The protein belongs to the ENY2 family. As to quaternary structure, component of the nuclear pore complex (NPC)-associated AMEX complex (anchoring and mRNA export complex), composed of at least e(y)2 and xmas-2. Component of the SAGA transcription coactivator-HAT complexes, at least composed of Ada2b, e(y)2, Pcaf/Gcn5, Taf10 and Nipped-A/Trrap. Within the SAGA complex, e(y)2, Sgf11, and not/nonstop form an additional subcomplex of SAGA called the DUB module (deubiquitination module). Component of the THO complex, composed of at least e(y)2, HPR1, THO2, THOC5, THOC6 and THOC7. Interacts with e(y)1. Interacts with su(Hw) (via zinc fingers). Interacts with xmas-2; required for localization to the nuclear periphery. Interacts with the nuclear pore complex (NPC).

Its subcellular location is the nucleus. It localises to the nucleoplasm. The protein resides in the cytoplasm. Its function is as follows. Involved in mRNA export coupled transcription activation by association with both the AMEX and the SAGA complexes. The SAGA complex is a multiprotein complex that activates transcription by remodeling chromatin and mediating histone acetylation and deubiquitination. Within the SAGA complex, participates in a subcomplex that specifically deubiquitinates histone H2B. The SAGA complex is recruited to specific gene promoters by activators, where it is required for transcription. Required for nuclear receptor-mediated transactivation. Involved in transcription elongation by recruiting the THO complex onto nascent mRNA. The AMEX complex functions in docking export-competent ribonucleoprotein particles (mRNPs) to the nuclear entrance of the nuclear pore complex (nuclear basket). AMEX participates in mRNA export and accurate chromatin positioning in the nucleus by tethering genes to the nuclear periphery. This is Enhancer of yellow 2 transcription factor from Drosophila pseudoobscura pseudoobscura (Fruit fly).